Reading from the N-terminus, the 358-residue chain is MNTFGNIYRLTSFGESHGPGIGGVIDGCPAGIELDTAFIQQELNRRKPGQSRITTPRKEDDEVQFLSGIYEGKTTGTPIGFIIWNKNQHSSDYDNMKTVYRPSHADYTYQTKYGIRDPRGGGRSSARETIARCVAGAIAKLALKQYGIQIQAYTSQVGPIKLAGSYQDYDLSLTEKSDVRCPDPKTASEMETLIAEVKSKGDTIGGVITCVAKGVPVGLGEPVFGKLHAALGHAMLTINAVKGFEYGDGFNAAFFRGSERNDRFFNDNGHINTRTNNSGGIQGGISNGQDIYFRVAFKSVATILMEQETVNMEGEDTILKARGRHDPCVLPRAVPIVESMTAMTLLDYLLIQKTRENF.

Residues arginine 46 and arginine 52 each coordinate NADP(+). Residues 123-125 (RSS), 239-240 (NA), glycine 283, 298-302 (KSVAT), and arginine 324 each bind FMN.

This sequence belongs to the chorismate synthase family. In terms of assembly, homotetramer. The cofactor is FMNH2.

The enzyme catalyses 5-O-(1-carboxyvinyl)-3-phosphoshikimate = chorismate + phosphate. Its pathway is metabolic intermediate biosynthesis; chorismate biosynthesis; chorismate from D-erythrose 4-phosphate and phosphoenolpyruvate: step 7/7. Its function is as follows. Catalyzes the anti-1,4-elimination of the C-3 phosphate and the C-6 proR hydrogen from 5-enolpyruvylshikimate-3-phosphate (EPSP) to yield chorismate, which is the branch point compound that serves as the starting substrate for the three terminal pathways of aromatic amino acid biosynthesis. This reaction introduces a second double bond into the aromatic ring system. This Parabacteroides distasonis (strain ATCC 8503 / DSM 20701 / CIP 104284 / JCM 5825 / NCTC 11152) protein is Chorismate synthase.